We begin with the raw amino-acid sequence, 325 residues long: Aldo-keto reductase family 1 member A1 (325 aa).

Residue Thr-2 is modified to N-acetylthreonine. The residue at position 4 (Ser-4) is a Phosphoserine. NADP(+) is bound by residues 11 to 20 (GQKMPLIGLG), Thr-21, and Trp-22. Lys-23 carries N-linked (Glc) (glycation) lysine glycosylation. Residue Ser-38 is modified to Phosphoserine. Asp-45 contacts NADP(+). Tyr-50 acts as the Proton donor in catalysis. N-linked (Glc) (glycation) lysine glycosylation is found at Lys-68 and Lys-85. Lys-127 carries the post-translational modification N6-acetyllysine; alternate. An N6-succinyllysine; alternate modification is found at Lys-127. N-linked (Glc) (glycation) lysine glycosylation is present at Lys-141. Lys-145 bears the N6-succinyllysine mark. Lys-153 is a glycosylation site (N-linked (Glc) (glycation) lysine). NADP(+) is bound by residues Ser-162, Asn-163, Ser-211, Leu-213, Ser-215, Ser-216, Lys-263, Ser-264, Ile-265, Thr-266, Arg-269, Gln-272, and Asn-273. Ser-211 is modified (phosphoserine).

Belongs to the aldo/keto reductase family. Monomer. Widely expressed.

Its subcellular location is the cytoplasm. The protein resides in the cytosol. The protein localises to the apical cell membrane. The enzyme catalyses a primary alcohol + NADP(+) = an aldehyde + NADPH + H(+). It catalyses the reaction L-gulonate + NADP(+) = aldehydo-D-glucuronate + NADPH + H(+). It carries out the reaction L-gulono-1,4-lactone + NADP(+) = D-glucurono-3,6-lactone + NADPH + H(+). The catalysed reaction is allyl alcohol + NADP(+) = acrolein + NADPH + H(+). The enzyme catalyses glycerol + NADP(+) = D-glyceraldehyde + NADPH + H(+). It catalyses the reaction glycerol + NADP(+) = L-glyceraldehyde + NADPH + H(+). It carries out the reaction hydroxyacetone + NADP(+) = methylglyoxal + NADPH + H(+). The catalysed reaction is 3-deoxyfructose + NADP(+) = 3-deoxyglucosone + NADPH + H(+). The enzyme catalyses (R)-mevalonate + NADP(+) = (R)-mevaldate + NADPH + H(+). It catalyses the reaction pyridine 3-methanol + NADP(+) = pyridine-3-carbaldehyde + NADPH + H(+). It carries out the reaction S-nitroso-CoA + NADPH + H(+) = sulfinamide-CoA + NADP(+). The catalysed reaction is S-nitrosoglutathione + NADPH + H(+) = S-(hydroxysulfenamide)glutathione + NADP(+). Functionally, catalyzes the NADPH-dependent reduction of a wide variety of carbonyl-containing compounds to their corresponding alcohols. Displays enzymatic activity towards endogenous metabolites such as aromatic and aliphatic aldehydes, ketones, monosaccharides and bile acids. Plays an important role in ascorbic acid biosynthesis by catalyzing the reduction of D-glucuronic acid and D-glucurono-gamma-lactone. Functions as a detoxifiying enzyme by reducing a range of toxic aldehydes. Reduces methylglyoxal and 3-deoxyglucosone, which are present at elevated levels under hyperglycemic conditions and are cytotoxic. Involved also in the detoxification of lipid-derived aldehydes like acrolein. Plays a role in the activation of procarcinogens, such as polycyclic aromatic hydrocarbon trans-dihydrodiols, and in the metabolism of various xenobiotics and drugs. Also acts as an inhibitor of protein S-nitrosylation by mediating degradation of S-nitroso-coenzyme A (S-nitroso-CoA), a cofactor required to S-nitrosylate proteins. S-nitroso-CoA reductase activity is involved in reprogramming intermediary metabolism in renal proximal tubules, notably by inhibiting protein S-nitrosylation of isoform 2 of PKM (PKM2). Also acts as a S-nitroso-glutathione reductase by catalyzing the NADPH-dependent reduction of S-nitrosoglutathione. Displays no reductase activity towards retinoids. The sequence is that of Aldo-keto reductase family 1 member A1 (Akr1a1) from Rattus norvegicus (Rat).